Reading from the N-terminus, the 766-residue chain is Polyribonucleotide nucleotidyltransferase (766 aa).

Mg(2+)-binding residues include Asp490 and Asp496. Residues 557-616 (PKIDTITIPVDKIKVVIGKGGEQIDKIIAETGVKIDIDDEGLCSIFSSDQSAIDRAKEII) form the KH domain. Residues 626–694 (GEVYEAKVVR…DKGRVDASMR (69 aa)) form the S1 motif domain. Basic and acidic residues-rich tracts occupy residues 700 to 734 (PEGYVEPERKPRERRDNKDRRNGNGFDRRNNDRNN) and 744 to 766 (FELRERKSHVDHEFPELSTKKPE). Residues 700-766 (PEGYVEPERK…FPELSTKKPE (67 aa)) form a disordered region.

This sequence belongs to the polyribonucleotide nucleotidyltransferase family. Mg(2+) is required as a cofactor.

It is found in the cytoplasm. It catalyses the reaction RNA(n+1) + phosphate = RNA(n) + a ribonucleoside 5'-diphosphate. In terms of biological role, involved in mRNA degradation. Catalyzes the phosphorolysis of single-stranded polyribonucleotides processively in the 3'- to 5'-direction. This Lactococcus lactis subsp. cremoris (strain MG1363) protein is Polyribonucleotide nucleotidyltransferase.